We begin with the raw amino-acid sequence, 407 residues long: Cytochrome P450 NovI (407 aa).

Residue Cys357 coordinates heme.

This sequence belongs to the cytochrome P450 family. Heme is required as a cofactor.

Its pathway is antibiotic biosynthesis; novobiocin biosynthesis. Its function is as follows. Together with NovH, involved in the formation of a beta-OH-Tyr intermediate in the novobiocin biosynthesis pathway, an aminocoumarin family antibiotic that targets bacterial DNA gyrases. Acts as a cytochrome P450-type monooxygenase with specificity for the tyrosyl-S-NovH acyl enzyme (L-Tyr-S-NovH) to form the beta-OH-Tyr intermediate (L-beta-OH-Tyr-S-NovH). The chain is Cytochrome P450 NovI (novI) from Streptomyces niveus (Streptomyces spheroides).